We begin with the raw amino-acid sequence, 37 residues long: Photosystem I reaction center subunit IX (37 aa).

Residues 4–24 (FLTTAPVVAAIWFTLTAGILI) form a helical membrane-spanning segment.

Belongs to the PsaJ family.

It is found in the cellular thylakoid membrane. Functionally, may help in the organization of the PsaE and PsaF subunits. This chain is Photosystem I reaction center subunit IX, found in Synechococcus sp. (strain WH7803).